The following is a 397-amino-acid chain: uncharacterized protein (397 aa).

11 helical membrane passes run 9–29 (NAVL…GFLT), 38–58 (LLAS…GAQL), 85–105 (FLAA…VGGA), 112–132 (IFGI…ILIF), 148–168 (MGFI…PPVV), 182–202 (PIAI…FAGA), 226–246 (AILI…GVVS), 271–291 (VLFG…AAYT), 310–330 (WIIA…KPAA), 331–351 (VLVF…ALIL), and 365–385 (HPVF…ILSG).

This sequence belongs to the NRAMP family.

Its subcellular location is the cell membrane. This is an uncharacterized protein from Haemophilus influenzae (strain ATCC 51907 / DSM 11121 / KW20 / Rd).